Reading from the N-terminus, the 359-residue chain is Chaperone protein DnaJ (359 aa).

A J domain is found at 3–68 (DYYEILGVPK…ERRQTYDRYG (66 aa)). The segment at 128 to 205 (GVSKDIKYKI…CAGKGFIEEQ (78 aa)) adopts a CR-type zinc-finger fold. Zn(2+) is bound by residues C141, C144, C157, C160, C179, C182, C193, and C196. CXXCXGXG motif repeat units lie at residues 141–148 (CKTCDGTG), 157–164 (CPYCGGSG), 179–186 (CPFCKGSG), and 193–200 (CHDCAGKG).

Belongs to the DnaJ family. In terms of assembly, homodimer. Zn(2+) is required as a cofactor.

It localises to the cytoplasm. Participates actively in the response to hyperosmotic and heat shock by preventing the aggregation of stress-denatured proteins and by disaggregating proteins, also in an autonomous, DnaK-independent fashion. Unfolded proteins bind initially to DnaJ; upon interaction with the DnaJ-bound protein, DnaK hydrolyzes its bound ATP, resulting in the formation of a stable complex. GrpE releases ADP from DnaK; ATP binding to DnaK triggers the release of the substrate protein, thus completing the reaction cycle. Several rounds of ATP-dependent interactions between DnaJ, DnaK and GrpE are required for fully efficient folding. Also involved, together with DnaK and GrpE, in the DNA replication of plasmids through activation of initiation proteins. This is Chaperone protein DnaJ from Campylobacter hominis (strain ATCC BAA-381 / DSM 21671 / CCUG 45161 / LMG 19568 / NCTC 13146 / CH001A).